A 30-amino-acid chain; its full sequence is uncharacterized protein (30 aa).

This is an uncharacterized protein from Dictyostelium discoideum (Social amoeba).